The following is a 296-amino-acid chain: uncharacterized protein (296 aa).

Residues 1 to 20 form the signal peptide; that stretch reads MRKFIFVLLTLLLVSPFSFA.

This is an uncharacterized protein from Escherichia coli (strain K12).